A 453-amino-acid chain; its full sequence is Macrophage scavenger receptor types I and II (453 aa).

Residues 1-50 (MAQWDDFPDQQEDTDSCTESVKFDARSVTALLPPHPKNGPTLQERMKSYK) are Cytoplasmic-facing. Phosphoserine is present on Ser27. Residues 51-76 (TALITLYLIVFVVLVPIIGIVAAQLL) traverse the membrane as a helical; Signal-anchor for type II membrane protein segment. The segment at 77 to 108 (KWETKNCTVGSVNADISPSPEGKGNGSEDEMR) is spacer. At 77 to 453 (KWETKNCTVG…DEDAGVTCTT (377 aa)) the chain is on the extracellular side. N-linked (GlcNAc...) asparagine glycans are attached at residues Asn82, Asn101, Asn142, Asn183, Asn220, Asn248, and Asn266. The stretch at 194–255 (ETLNGRVQEN…LNNITNDLRL (62 aa)) forms a coiled coil. Disordered stretches follow at residues 267–295 (ITLL…PGFP) and 313–349 (PGVR…QRQS). The 72-residue stretch at 272–343 (GPPGPPGEKG…KGQKGEKGSG (72 aa)) folds into the Collagen-like domain. Positions 352–452 (VRLVGGSGPH…HDEDAGVTCT (101 aa)) constitute an SRCR domain. Disulfide bonds link Cys377-Cys441, Cys390-Cys451, and Cys421-Cys431.

Homotrimer. Interacts with MYO18A.

It is found in the membrane. Its function is as follows. Membrane glycoproteins implicated in the pathologic deposition of cholesterol in arterial walls during atherogenesis. Two types of receptor subunits exist. These receptors mediate the endocytosis of a diverse group of macromolecules, including modified low density lipoproteins (LDL). This chain is Macrophage scavenger receptor types I and II (MSR1), found in Bos taurus (Bovine).